Here is a 614-residue protein sequence, read N- to C-terminus: Putative ABC transporter ATP-binding protein MA_1747 (614 aa).

ABC transporter domains follow at residues 11–251 (VRLE…KLGI) and 319–552 (VLIE…AGLL). Residues 45 to 52 (GPSGCGKS) and 352 to 359 (GHNGAGKT) contribute to the ATP site.

This sequence belongs to the ABC transporter superfamily.

The protein resides in the cell membrane. In terms of biological role, probably part of an ABC transporter complex. Responsible for energy coupling to the transport system. This is Putative ABC transporter ATP-binding protein MA_1747 from Methanosarcina acetivorans (strain ATCC 35395 / DSM 2834 / JCM 12185 / C2A).